Reading from the N-terminus, the 481-residue chain is Aspartyl/glutamyl-tRNA(Asn/Gln) amidotransferase subunit B (481 aa).

Belongs to the GatB/GatE family. GatB subfamily. In terms of assembly, heterotrimer of A, B and C subunits.

It carries out the reaction L-glutamyl-tRNA(Gln) + L-glutamine + ATP + H2O = L-glutaminyl-tRNA(Gln) + L-glutamate + ADP + phosphate + H(+). The enzyme catalyses L-aspartyl-tRNA(Asn) + L-glutamine + ATP + H2O = L-asparaginyl-tRNA(Asn) + L-glutamate + ADP + phosphate + 2 H(+). Its function is as follows. Allows the formation of correctly charged Asn-tRNA(Asn) or Gln-tRNA(Gln) through the transamidation of misacylated Asp-tRNA(Asn) or Glu-tRNA(Gln) in organisms which lack either or both of asparaginyl-tRNA or glutaminyl-tRNA synthetases. The reaction takes place in the presence of glutamine and ATP through an activated phospho-Asp-tRNA(Asn) or phospho-Glu-tRNA(Gln). In Ectopseudomonas mendocina (strain ymp) (Pseudomonas mendocina), this protein is Aspartyl/glutamyl-tRNA(Asn/Gln) amidotransferase subunit B.